The sequence spans 207 residues: NADH-quinone oxidoreductase subunit C (207 aa).

Belongs to the complex I 30 kDa subunit family. NDH-1 is composed of 14 different subunits. Subunits NuoB, C, D, E, F, and G constitute the peripheral sector of the complex.

Its subcellular location is the cell inner membrane. It catalyses the reaction a quinone + NADH + 5 H(+)(in) = a quinol + NAD(+) + 4 H(+)(out). Its function is as follows. NDH-1 shuttles electrons from NADH, via FMN and iron-sulfur (Fe-S) centers, to quinones in the respiratory chain. The immediate electron acceptor for the enzyme in this species is believed to be ubiquinone. Couples the redox reaction to proton translocation (for every two electrons transferred, four hydrogen ions are translocated across the cytoplasmic membrane), and thus conserves the redox energy in a proton gradient. The polypeptide is NADH-quinone oxidoreductase subunit C (Thermus thermophilus (strain ATCC BAA-163 / DSM 7039 / HB27)).